The chain runs to 295 residues: 33 kDa chaperonin (295 aa).

Intrachain disulfides connect Cys-237/Cys-239 and Cys-270/Cys-273.

Belongs to the HSP33 family. Post-translationally, under oxidizing conditions two disulfide bonds are formed involving the reactive cysteines. Under reducing conditions zinc is bound to the reactive cysteines and the protein is inactive.

The protein resides in the cytoplasm. In terms of biological role, redox regulated molecular chaperone. Protects both thermally unfolding and oxidatively damaged proteins from irreversible aggregation. Plays an important role in the bacterial defense system toward oxidative stress. The sequence is that of 33 kDa chaperonin from Geobacillus sp. (strain WCH70).